A 506-amino-acid chain; its full sequence is MTYLLALDQGTSSSRSIVFDERGHIVAQAQQELPQIYPQPGWVEHDPVDIWRTQIATARQALAQANIGPGDVRALGITNQRETTVLWNRRTGQPVHHAIVWQDRRAEPLCAELREQGHEPMIQERTGLRIDAYFSATKLRWLLDQVPGARAAAEAGELAFGTVDSWLIWQLTGGKVHVTDVSNASRTMLFNVHSNDWDDDLLALLRIPRKLLPRVQPSASDFGATDAALLGGAIPIGGVAGDQQSALFGQACFTAGMAKNTYGTGCFMLMHTGSSFQTSRNGLLTTSAAQIAPRTGAGHGAPEPAFAMEGSVFVGGAVVQWLRDGLRAISSSSEVQSLAESVPDSGGVMMVPAFTGLGAPYWKPDARGTITGLTRGTTIAHIARAALESIAYQSAALLQAMSRDAVAAGGAPVSELRVDGGACVNDLLMQFQADLLGIPVVRPAVIETTALGAAYLAGLSSGVYAGTEALSALWRAERRFLPTLSAARAQECMARWEHAVRQAALD.

An ADP-binding site is contributed by Thr11. 3 residues coordinate ATP: Thr11, Ser12, and Ser13. Thr11 contributes to the sn-glycerol 3-phosphate binding site. Arg15 contributes to the ADP binding site. Residues Arg81, Glu82, Tyr133, and Asp242 each coordinate sn-glycerol 3-phosphate. Glycerol-binding residues include Arg81, Glu82, Tyr133, Asp242, and Gln243. Residues Thr264 and Gly316 each coordinate ADP. Residues Thr264, Gly316, Gln320, and Gly421 each coordinate ATP. Positions 421 and 425 each coordinate ADP.

Belongs to the FGGY kinase family.

It catalyses the reaction glycerol + ATP = sn-glycerol 3-phosphate + ADP + H(+). Its pathway is polyol metabolism; glycerol degradation via glycerol kinase pathway; sn-glycerol 3-phosphate from glycerol: step 1/1. Inhibited by fructose 1,6-bisphosphate (FBP). In terms of biological role, key enzyme in the regulation of glycerol uptake and metabolism. Catalyzes the phosphorylation of glycerol to yield sn-glycerol 3-phosphate. The protein is Glycerol kinase of Paracidovorax citrulli (strain AAC00-1) (Acidovorax citrulli).